A 55-amino-acid polypeptide reads, in one-letter code: Sec-independent protein translocase protein TatA (55 aa).

The chain crosses the membrane as a helical span at residues 1 to 21 (MFGELGVPEVLFILGIALLIF).

It belongs to the TatA/E family. As to quaternary structure, forms a complex with TatC.

The protein resides in the cell inner membrane. Its function is as follows. Part of the twin-arginine translocation (Tat) system that transports large folded proteins containing a characteristic twin-arginine motif in their signal peptide across membranes. TatA could form the protein-conducting channel of the Tat system. The protein is Sec-independent protein translocase protein TatA of Koribacter versatilis (strain Ellin345).